We begin with the raw amino-acid sequence, 260 residues long: Thiazole synthase (260 aa).

The active-site Schiff-base intermediate with DXP is the K102. 1-deoxy-D-xylulose 5-phosphate-binding positions include G163, 189-190 (AG), and 211-212 (NT).

This sequence belongs to the ThiG family. As to quaternary structure, homotetramer. Forms heterodimers with either ThiH or ThiS.

The protein resides in the cytoplasm. The enzyme catalyses [ThiS sulfur-carrier protein]-C-terminal-Gly-aminoethanethioate + 2-iminoacetate + 1-deoxy-D-xylulose 5-phosphate = [ThiS sulfur-carrier protein]-C-terminal Gly-Gly + 2-[(2R,5Z)-2-carboxy-4-methylthiazol-5(2H)-ylidene]ethyl phosphate + 2 H2O + H(+). Its pathway is cofactor biosynthesis; thiamine diphosphate biosynthesis. Functionally, catalyzes the rearrangement of 1-deoxy-D-xylulose 5-phosphate (DXP) to produce the thiazole phosphate moiety of thiamine. Sulfur is provided by the thiocarboxylate moiety of the carrier protein ThiS. In vitro, sulfur can be provided by H(2)S. The chain is Thiazole synthase from Geobacter metallireducens (strain ATCC 53774 / DSM 7210 / GS-15).